A 556-amino-acid chain; its full sequence is Arginine--tRNA ligase (556 aa).

Residues 132 to 142 (ANPTGDLHLGH) carry the 'HIGH' region motif.

The protein belongs to the class-I aminoacyl-tRNA synthetase family. In terms of assembly, monomer.

It is found in the cytoplasm. The enzyme catalyses tRNA(Arg) + L-arginine + ATP = L-arginyl-tRNA(Arg) + AMP + diphosphate. In Bacillus cereus (strain ATCC 10987 / NRS 248), this protein is Arginine--tRNA ligase.